A 213-amino-acid polypeptide reads, in one-letter code: Uridine kinase (213 aa).

Residue 13–20 participates in ATP binding; it reads GGSCSGKT.

It belongs to the uridine kinase family.

Its subcellular location is the cytoplasm. It catalyses the reaction uridine + ATP = UMP + ADP + H(+). It carries out the reaction cytidine + ATP = CMP + ADP + H(+). The protein operates within pyrimidine metabolism; CTP biosynthesis via salvage pathway; CTP from cytidine: step 1/3. It functions in the pathway pyrimidine metabolism; UMP biosynthesis via salvage pathway; UMP from uridine: step 1/1. In Mycoplasma pneumoniae (strain ATCC 29342 / M129 / Subtype 1) (Mycoplasmoides pneumoniae), this protein is Uridine kinase (udk).